The primary structure comprises 66 residues: Large ribosomal subunit protein bL28 (66 aa).

Belongs to the bacterial ribosomal protein bL28 family.

This chain is Large ribosomal subunit protein bL28, found in Oenococcus oeni (strain ATCC BAA-331 / PSU-1).